A 368-amino-acid polypeptide reads, in one-letter code: Spermidine/putrescine import ATP-binding protein PotA (368 aa).

Residues 8-238 (IELKNVSKIF…PVNLFVARFV (231 aa)) enclose the ABC transporter domain. 40 to 47 (GPSGCGKT) is a binding site for ATP.

This sequence belongs to the ABC transporter superfamily. Spermidine/putrescine importer (TC 3.A.1.11.1) family. As to quaternary structure, the complex is composed of two ATP-binding proteins (PotA), two transmembrane proteins (PotB and PotC) and a solute-binding protein (PotD).

Its subcellular location is the cell membrane. It carries out the reaction ATP + H2O + polyamine-[polyamine-binding protein]Side 1 = ADP + phosphate + polyamineSide 2 + [polyamine-binding protein]Side 1.. Functionally, part of the ABC transporter complex PotABCD involved in spermidine/putrescine import. Responsible for energy coupling to the transport system. This chain is Spermidine/putrescine import ATP-binding protein PotA, found in Lawsonia intracellularis (strain PHE/MN1-00).